Reading from the N-terminus, the 123-residue chain is Large ribosomal subunit protein uL14 (123 aa).

Belongs to the universal ribosomal protein uL14 family. Part of the 50S ribosomal subunit. Forms a cluster with proteins L3 and L19. In the 70S ribosome, L14 and L19 interact and together make contacts with the 16S rRNA in bridges B5 and B8.

Functionally, binds to 23S rRNA. Forms part of two intersubunit bridges in the 70S ribosome. In Chromohalobacter salexigens (strain ATCC BAA-138 / DSM 3043 / CIP 106854 / NCIMB 13768 / 1H11), this protein is Large ribosomal subunit protein uL14.